The primary structure comprises 464 residues: 3-isopropylmalate dehydratase large subunit (464 aa).

Positions 337, 397, and 400 each coordinate [4Fe-4S] cluster.

It belongs to the aconitase/IPM isomerase family. LeuC type 1 subfamily. As to quaternary structure, heterodimer of LeuC and LeuD. Requires [4Fe-4S] cluster as cofactor.

The enzyme catalyses (2R,3S)-3-isopropylmalate = (2S)-2-isopropylmalate. It participates in amino-acid biosynthesis; L-leucine biosynthesis; L-leucine from 3-methyl-2-oxobutanoate: step 2/4. In terms of biological role, catalyzes the isomerization between 2-isopropylmalate and 3-isopropylmalate, via the formation of 2-isopropylmaleate. This is 3-isopropylmalate dehydratase large subunit from Bacillus cereus (strain B4264).